The following is a 236-amino-acid chain: 2,3,4,5-tetrahydropyridine-2,6-dicarboxylate N-acetyltransferase (236 aa).

The protein belongs to the transferase hexapeptide repeat family. DapH subfamily.

It catalyses the reaction (S)-2,3,4,5-tetrahydrodipicolinate + acetyl-CoA + H2O = L-2-acetamido-6-oxoheptanedioate + CoA. The protein operates within amino-acid biosynthesis; L-lysine biosynthesis via DAP pathway; LL-2,6-diaminopimelate from (S)-tetrahydrodipicolinate (acetylase route): step 1/3. Its function is as follows. Catalyzes the transfer of an acetyl group from acetyl-CoA to tetrahydrodipicolinate. This Clostridium botulinum (strain Okra / Type B1) protein is 2,3,4,5-tetrahydropyridine-2,6-dicarboxylate N-acetyltransferase.